The following is a 617-amino-acid chain: Sodium-dependent noradrenaline transporter (617 aa).

The tract at residues methionine 1 to glutamine 23 is disordered. Residues methionine 1–lysine 62 lie on the Cytoplasmic side of the membrane. Positions proline 8 to alanine 17 are enriched in polar residues. The helical transmembrane segment at isoleucine 63–lysine 88 threads the bilayer. 3 residues coordinate Na(+): glycine 71, alanine 73, and valine 74. Aspartate 75 is a binding site for (R)-noradrenaline. Aspartate 75 contributes to the dopamine binding site. Residue asparagine 78 coordinates Na(+). Positions 87 and 88 each coordinate (R)-noradrenaline. Over asparagine 89 to glycine 92 the chain is Extracellular. The helical transmembrane segment at alanine 93–leucine 116 threads the bilayer. Residues glycine 117–lysine 135 lie on the Cytoplasmic side of the membrane. A helical membrane pass occupies residues glycine 136–serine 166. Residues alanine 145 and glycine 149 each contribute to the (R)-noradrenaline site. Alanine 145 contributes to the dopamine binding site. Over phenylalanine 167–proline 233 the chain is Extracellular. A disulfide bridge links cysteine 176 with cysteine 185. Asparagine 184, asparagine 192, and asparagine 198 each carry an N-linked (GlcNAc...) asparagine glycan. Residues glutamine 234–lysine 254 traverse the membrane as a helical segment. Residues glycine 255–lysine 257 lie on the Cytoplasmic side of the membrane. Residues threonine 258–valine 282 form a helical membrane-spanning segment. Residues threonine 283–threonine 306 are Extracellular-facing. Residues valine 307–tyrosine 332 traverse the membrane as a helical segment. Phenylalanine 317 contributes to the (R)-noradrenaline binding site. Phenylalanine 317 is a binding site for dopamine. Serine 318 is a binding site for Na(+). The Cytoplasmic segment spans residues asparagine 333–asparagine 338. A helical transmembrane segment spans residues cysteine 339 to phenylalanine 362. Asparagine 350 contributes to the Na(+) binding site. Over serine 363–threonine 402 the chain is Extracellular. Glutamate 382 provides a ligand contact to (R)-noradrenaline. Position 382 (glutamate 382) interacts with dopamine. A helical transmembrane segment spans residues phenylalanine 403–isoleucine 428. Residues aspartate 418 and serine 419 each contribute to the Na(+) site. At threonine 429 to lysine 443 the chain is on the cytoplasmic side. A helical membrane pass occupies residues leucine 444–glycine 464. Residue glycine 465 is a topological domain, extracellular. Residues isoleucine 466–valine 492 form a helical membrane-spanning segment. Topologically, residues serine 493 to lysine 522 are cytoplasmic. Residues phenylalanine 523 to tyrosine 545 traverse the membrane as a helical segment. The Extracellular segment spans residues aspartate 546 to tyrosine 548. Residues isoleucine 549–valine 569 form a helical membrane-spanning segment. Residues proline 570 to isoleucine 617 are Cytoplasmic-facing.

It belongs to the sodium:neurotransmitter symporter (SNF) (TC 2.A.22) family. SLC6A2 subfamily. In terms of assembly, monomer. Can form homodimers in the cell membrane; homodimerization is mostly mediated by cholesterol and lipids, and regulates neurotransmitter transport activity. Interacts with PRKCABP. Post-translationally, palmitoylated; palmitoylation regulates protein levels and neurotransmitter transport.

It is found in the cell membrane. Its subcellular location is the cell projection. The protein localises to the axon. The protein resides in the synapse. It localises to the synaptosome. It catalyses the reaction (R)-noradrenaline(out) + chloride(out) + Na(+)(out) = (R)-noradrenaline(in) + chloride(in) + Na(+)(in). It carries out the reaction dopamine(out) + chloride(out) + Na(+)(out) = dopamine(in) + chloride(in) + Na(+)(in). The catalysed reaction is dopamine(out) + chloride(out) + 2 Na(+)(out) = dopamine(in) + chloride(in) + 2 Na(+)(in). With respect to regulation, inhibited by mazindol, desipramine, nomifensine and nortriptyline. Functionally, mediates sodium- and chloride-dependent transport of norepinephrine (also known as noradrenaline), the primary signaling neurotransmitter in the autonomic sympathetic nervous system. Is responsible for norepinephrine re-uptake and clearance from the synaptic cleft, thus playing a crucial role in norepinephrine inactivation and homeostasis. Can also mediate sodium- and chloride-dependent transport of dopamine. The polypeptide is Sodium-dependent noradrenaline transporter (Homo sapiens (Human)).